A 559-amino-acid chain; its full sequence is Poly [ADP-ribose] polymerase 2 (559 aa).

Positions 1-58 are disordered; it reads MAPRRQRSGSGRRVLNEAKKVDNGNKATEDDSPPGKKMRTCQRKGPMAGGKDADRTKD. An N-terminal region (NTR) region spans residues 1 to 83; that stretch reads MAPRRQRSGS…VDPECAAKLG (83 aa). A compositionally biased stretch (basic and acidic residues) spans 14–29; sequence VLNEAKKVDNGNKATE. 2 short sequence motifs (nuclear localization signal) span residues 19-20 and 33-39; these read KK and PPGKKMR. N6-(ADP-ribosyl)lysine; alternate occurs at positions 36 and 37. Lys-36 and Lys-37 each carry N6-acetyllysine; alternate. Positions 84 to 181 constitute a WGR domain; that stretch reads KAHVYCEGDD…ENFEKVPGKY (98 aa). Positions 207–324 constitute a PARP alpha-helical domain; the sequence is ESQLDLRVQE…DIEIALKLVK (118 aa). Phosphoserine is present on Ser-208. The PARP catalytic domain maps to 332 to 559; sequence HPLDQHYRNL…KIQFNFLQLW (228 aa). Residues 404 to 406, Gly-413, Arg-420, and Ser-446 each bind NAD(+); that span reads HGS. Glu-534 serves as the catalytic For poly [ADP-ribose] polymerase activity.

The protein belongs to the ARTD/PARP family. Component of a base excision repair (BER) complex, containing at least XRCC1, PARP1, POLB and LRIG3. Homo- and heterodimer with PARP1. Interacts (via the PARP catalytic domain) with HPF1. Interacts with core nucleosomes. In terms of processing, auto poly-ADP-ribosylated on serine residues, leading to dissociation of the PARP2-HPF1 complex from chromatin. Poly-ADP-ribosylated by PARP1. Post-translationally, acetylation reduces DNA binding and enzymatic activity. Proteolytically cleaved by caspase-8 (CASP8) in response to apoptosis, leading to its inactivation. In terms of tissue distribution, widely expressed; the highest levels were in testis followed by ovary. Expression is correlated with proliferation, with higher levels occurring during early fetal development and organogenesis and in the highly proliferative cell compartments of adult.

Its subcellular location is the nucleus. It is found in the chromosome. It carries out the reaction NAD(+) + (ADP-D-ribosyl)n-acceptor = nicotinamide + (ADP-D-ribosyl)n+1-acceptor + H(+).. The enzyme catalyses L-seryl-[protein] + NAD(+) = O-(ADP-D-ribosyl)-L-seryl-[protein] + nicotinamide + H(+). It catalyses the reaction L-aspartyl-[protein] + NAD(+) = 4-O-(ADP-D-ribosyl)-L-aspartyl-[protein] + nicotinamide. The catalysed reaction is L-glutamyl-[protein] + NAD(+) = 5-O-(ADP-D-ribosyl)-L-glutamyl-[protein] + nicotinamide. With respect to regulation, ADP-ribosyltransferase activity is regulated via an allosteric activation mechanism. In absence of activation signal, PARP2 is autoinhibited by the PARP alpha-helical domain (also named HD region), which prevents effective NAD(+)-binding. Activity is highly stimulated by signals, which unfold the PARP alpha-helical domain, relieving autoinhibition. Poly-ADP-ribosyltransferase activity is tightly regulated and PARP2 is removed from damaged chromatin following initial poly-ADP-ribosylation of chromatin to avoid prolonged residence (trapping) that has cytotoxic consequences. CHD1L promotes PARP2 removal from chromatin. Functionally, poly-ADP-ribosyltransferase that mediates poly-ADP-ribosylation of proteins and plays a key role in DNA repair. Mediates glutamate, aspartate or serine ADP-ribosylation of proteins: the ADP-D-ribosyl group of NAD(+) is transferred to the acceptor carboxyl group of target residues and further ADP-ribosyl groups are transferred to the 2'-position of the terminal adenosine moiety, building up a polymer with an average chain length of 20-30 units. Serine ADP-ribosylation of proteins constitutes the primary form of ADP-ribosylation of proteins in response to DNA damage. Mediates glutamate and aspartate ADP-ribosylation of target proteins in absence of HPF1. Following interaction with HPF1, catalyzes serine ADP-ribosylation of target proteins; HPF1 conferring serine specificity by completing the PARP2 active site. PARP2 initiates the repair of double-strand DNA breaks: recognizes and binds DNA breaks within chromatin and recruits HPF1, licensing serine ADP-ribosylation of target proteins, such as histones, thereby promoting decompaction of chromatin and the recruitment of repair factors leading to the reparation of DNA strand breaks. HPF1 initiates serine ADP-ribosylation but restricts the polymerase activity of PARP2 in order to limit the length of poly-ADP-ribose chains. Specifically mediates formation of branched poly-ADP-ribosylation. Branched poly-ADP-ribose chains are specifically recognized by some factors, such as APLF. In addition to proteins, also able to ADP-ribosylate DNA: preferentially acts on 5'-terminal phosphates at DNA strand breaks termini in nicked duplex. The protein is Poly [ADP-ribose] polymerase 2 (Parp2) of Mus musculus (Mouse).